Consider the following 213-residue polypeptide: Thymidylate kinase (213 aa).

Position 10 to 17 (10 to 17 (GLEGAGKT)) interacts with ATP.

The protein belongs to the thymidylate kinase family.

It carries out the reaction dTMP + ATP = dTDP + ADP. In terms of biological role, phosphorylation of dTMP to form dTDP in both de novo and salvage pathways of dTTP synthesis. This chain is Thymidylate kinase, found in Escherichia coli O7:K1 (strain IAI39 / ExPEC).